The sequence spans 390 residues: GPI inositol-deacylase (390 aa).

The helical transmembrane segment at 21 to 41 threads the bilayer; the sequence is FIVYFIICLTIIISALGVYLY. The active site involves Ser202. Residues 354-374 traverse the membrane as a helical segment; that stretch reads VHLLSLTIFALKWTIIVLAII.

Belongs to the GPI inositol-deacylase family.

The protein localises to the endoplasmic reticulum membrane. In terms of biological role, involved in inositol deacylation of GPI-anchored proteins which plays important roles in the quality control and ER-associated degradation of GPI-anchored proteins. This chain is GPI inositol-deacylase (BST1), found in Candida albicans (strain SC5314 / ATCC MYA-2876) (Yeast).